A 459-amino-acid polypeptide reads, in one-letter code: MDLDTITSISTPMGEGAIGIVRLSGPQAVEIADKLYKGKHLLNDVPSHTINYGHIIDPESKEVVEEVMVSVLRAPKTFTREDIIEINCHGGILTINRVLELTMTYGARMAEPGEFTKRAFLNGRIDLSQAEAVMDFIRSKTDRASKVAMNQIEGRLSDLIKKQRQSILEILAQVEVNIDYPEYDDVEDATTEFLLEQSKEIKQEINRLLDTGAQGKIMREGLSTVIVGKPNVGKSSMLNNLIQDNKAIVTEVAGTTRDVLEEYVNVRSVPLRLVDTAGIRETEDIVEKIGVERSRKALSQADLILFVLNNNEALTQEDYTLYEVVKNEDVIVIVNKMDLEQNIDINEVKDMIGDTPLIQTSMLKQEGIDELEIQIRDLFFGGEVQNQDMTYVSNSRHISLLKQARQTIQDAIDAAESGVPMDMVQIDLTRTWEILGEIIGETASDELIDQLFSQFCLGK.

Arg-22, Glu-85, and Arg-124 together coordinate (6S)-5-formyl-5,6,7,8-tetrahydrofolate. In terms of domain architecture, TrmE-type G spans 221-380 (GLSTVIVGKP…LEIQIRDLFF (160 aa)). Asn-231 is a K(+) binding site. GTP-binding positions include 231-236 (NVGKSS), 250-256 (TEVAGTT), and 275-278 (DTAG). A Mg(2+)-binding site is contributed by Ser-235. Residues Thr-250, Val-252, and Thr-255 each coordinate K(+). Residue Thr-256 coordinates Mg(2+). (6S)-5-formyl-5,6,7,8-tetrahydrofolate is bound at residue Lys-459.

The protein belongs to the TRAFAC class TrmE-Era-EngA-EngB-Septin-like GTPase superfamily. TrmE GTPase family. Homodimer. Heterotetramer of two MnmE and two MnmG subunits. The cofactor is K(+).

It is found in the cytoplasm. Its function is as follows. Exhibits a very high intrinsic GTPase hydrolysis rate. Involved in the addition of a carboxymethylaminomethyl (cmnm) group at the wobble position (U34) of certain tRNAs, forming tRNA-cmnm(5)s(2)U34. The protein is tRNA modification GTPase MnmE of Staphylococcus aureus (strain Mu3 / ATCC 700698).